Reading from the N-terminus, the 423-residue chain is Protein disulfide isomerase-like 5-2 (423 aa).

Positions 1 to 35 (MAATTTRPLPLLLLLLLPPLLLLLLSFHAAAAAAA) are cleaved as a signal peptide. The Thioredoxin domain occupies 36-149 (EEFPRDGRVI…LVRNLNKFVA (114 aa)). Residues C71 and C74 each act as nucleophile in the active site. C71 and C74 are joined by a disulfide. N-linked (GlcNAc...) asparagine glycosylation is present at N181. Residues 386–406 (LVSLNSLYILICVFALLGVMI) traverse the membrane as a helical segment.

Belongs to the protein disulfide isomerase family.

The protein localises to the membrane. Acts as a protein-folding catalyst that interacts with nascent polypeptides to catalyze the formation, isomerization, and reduction or oxidation of disulfide bonds. May play a role in storage protein biogenesis. The sequence is that of Protein disulfide isomerase-like 5-2 (PDIL5-2) from Oryza sativa subsp. japonica (Rice).